The chain runs to 690 residues: Protein arginine N-methyltransferase 7 (690 aa).

2 consecutive SAM-dependent MTase PRMT-type domains span residues 14-357 (QNSW…YSLW) and 366-690 (TKSV…QKKL).

Belongs to the class I-like SAM-binding methyltransferase superfamily. Protein arginine N-methyltransferase family. PRMT7 subfamily. In terms of tissue distribution, expressed at low level in ovary.

Its function is as follows. Essential arginine methyltransferase that can both catalyze the formation of omega-N monomethylarginine (MMA) and symmetrical dimethylarginine (sDMA). Specifically mediates the symmetrical dimethylation of arginine residues in the small nuclear ribonucleoproteins SmD1 and SmD3. This is Protein arginine N-methyltransferase 7 (Art7) from Drosophila melanogaster (Fruit fly).